The primary structure comprises 478 residues: Deoxyribodipyrimidine photo-lyase (478 aa).

The 135-residue stretch at 2–136 (NVNLMWFRND…IINCFHDSVL (135 aa)) folds into the Photolyase/cryptochrome alpha/beta domain. Glu-110 contributes to the (6R)-5,10-methylene-5,6,7,8-tetrahydrofolate binding site. Residues Tyr-227 and 239 to 243 (TSMLS) contribute to the FAD site. 2 interaction with DNA regions span residues 279–286 (ELLWREFY) and 346–347 (NR). 377–379 (DGD) contributes to the FAD binding site. Gln-409 serves as a coordination point for DNA.

This sequence belongs to the DNA photolyase class-1 family. As to quaternary structure, monomer. The cofactor is FAD. It depends on (6R)-5,10-methylene-5,6,7,8-tetrahydrofolate as a cofactor.

The enzyme catalyses cyclobutadipyrimidine (in DNA) = 2 pyrimidine residues (in DNA).. Its function is as follows. Involved in repair of UV radiation-induced DNA damage. Catalyzes the light-dependent monomerization (300-600 nm) of cyclobutyl pyrimidine dimers (in cis-syn configuration), which are formed between adjacent bases on the same DNA strand upon exposure to ultraviolet radiation. The sequence is that of Deoxyribodipyrimidine photo-lyase (phrB) from Buchnera aphidicola subsp. Baizongia pistaciae (strain Bp).